Reading from the N-terminus, the 299-residue chain is tRNA dimethylallyltransferase (299 aa).

10–17 (GPTAVGKT) lines the ATP pocket. Residue 12–17 (TAVGKT) participates in substrate binding. The interval 35–38 (DSQQ) is interaction with substrate tRNA.

It belongs to the IPP transferase family. In terms of assembly, monomer. It depends on Mg(2+) as a cofactor.

It catalyses the reaction adenosine(37) in tRNA + dimethylallyl diphosphate = N(6)-dimethylallyladenosine(37) in tRNA + diphosphate. Catalyzes the transfer of a dimethylallyl group onto the adenine at position 37 in tRNAs that read codons beginning with uridine, leading to the formation of N6-(dimethylallyl)adenosine (i(6)A). This chain is tRNA dimethylallyltransferase, found in Streptococcus thermophilus (strain ATCC BAA-250 / LMG 18311).